Here is a 392-residue protein sequence, read N- to C-terminus: Phosphoglycerate kinase (392 aa).

Substrate-binding positions include 21 to 23 (DLN), Arg36, 59 to 62 (HRGR), Arg113, and Arg146. ATP contacts are provided by residues Lys197, Glu314, and 340–343 (GGDT).

It belongs to the phosphoglycerate kinase family. As to quaternary structure, monomer.

It is found in the cytoplasm. It catalyses the reaction (2R)-3-phosphoglycerate + ATP = (2R)-3-phospho-glyceroyl phosphate + ADP. It functions in the pathway carbohydrate degradation; glycolysis; pyruvate from D-glyceraldehyde 3-phosphate: step 2/5. This chain is Phosphoglycerate kinase, found in Vesicomyosocius okutanii subsp. Calyptogena okutanii (strain HA).